A 482-amino-acid chain; its full sequence is Aspartyl/glutamyl-tRNA(Asn/Gln) amidotransferase subunit B (482 aa).

Belongs to the GatB/GatE family. GatB subfamily. Heterotrimer of A, B and C subunits.

The catalysed reaction is L-glutamyl-tRNA(Gln) + L-glutamine + ATP + H2O = L-glutaminyl-tRNA(Gln) + L-glutamate + ADP + phosphate + H(+). It carries out the reaction L-aspartyl-tRNA(Asn) + L-glutamine + ATP + H2O = L-asparaginyl-tRNA(Asn) + L-glutamate + ADP + phosphate + 2 H(+). In terms of biological role, allows the formation of correctly charged Asn-tRNA(Asn) or Gln-tRNA(Gln) through the transamidation of misacylated Asp-tRNA(Asn) or Glu-tRNA(Gln) in organisms which lack either or both of asparaginyl-tRNA or glutaminyl-tRNA synthetases. The reaction takes place in the presence of glutamine and ATP through an activated phospho-Asp-tRNA(Asn) or phospho-Glu-tRNA(Gln). This Thermotoga neapolitana (strain ATCC 49049 / DSM 4359 / NBRC 107923 / NS-E) protein is Aspartyl/glutamyl-tRNA(Asn/Gln) amidotransferase subunit B.